Reading from the N-terminus, the 301-residue chain is Small ribosomal subunit protein uS2 (301 aa).

Belongs to the universal ribosomal protein uS2 family.

This Acidobacterium capsulatum (strain ATCC 51196 / DSM 11244 / BCRC 80197 / JCM 7670 / NBRC 15755 / NCIMB 13165 / 161) protein is Small ribosomal subunit protein uS2.